Reading from the N-terminus, the 547-residue chain is MTKFVFVTGGVVSSIGKGIVAASLGRLLKSRNYSVSILKLDPYINVDPGTMSPFQHGEVFVTEDGAETDLDLGHYERFTDTSMSRLNSVTTGSIYQAVINKERRGAYMGGTVQVIPHITNEIKERIHRVAKNTNPDVVITEIGGTVGDIESLPFLEAIRQFRKDVGRNNVVYMHVTLIPWIPAAREMKTKPTQHSVKELRSIGIQPDVLVCRCDRPLKEGMKEKLSEFCDVPVESVITAQDASSIYEVPLIVEREGLAQQTLALLNLEPRQPNLTDWQTLVQRMQTPQRQIEIALVGKYVQLSDAYLSVVESLVHGGIAVNSEVKLNWVNAEDIEQYGAEKFLKDVSGILVPGGFGIRGVDGKVQAIQYARQQKIPFLGLCLGMQCAVIEWARNIARLERSNSAEFDPETPNPVINLLPEQEDVVDLGGTMRLGLYACRLSPDTLASSLYPQEVIYERHRHRYEFNNAYRSLLIETGYVVSGTSPDGRLVEIIELPGHPFFIATQFHPEFQSRPNSPHPLFLGFVKAAVDHYSTCLTEDEECEEVKE.

Residues 1 to 267 are amidoligase domain; it reads MTKFVFVTGG…AQQTLALLNL (267 aa). Residue S13 coordinates CTP. S13 lines the UTP pocket. ATP is bound by residues 14–19 and D71; that span reads SIGKGI. Mg(2+) contacts are provided by D71 and E141. Residues 148–150, 188–193, and K224 each bind CTP; these read DIE and KTKPTQ. UTP is bound by residues 188-193 and K224; that span reads KTKPTQ. In terms of domain architecture, Glutamine amidotransferase type-1 spans 292-534; that stretch reads EIALVGKYVQ…VKAAVDHYST (243 aa). G354 is a binding site for L-glutamine. The active-site Nucleophile; for glutamine hydrolysis is the C381. Residues 382-385, E405, and R462 each bind L-glutamine; that span reads LGMQ. Active-site residues include H507 and E509.

It belongs to the CTP synthase family. In terms of assembly, homotetramer.

It catalyses the reaction UTP + L-glutamine + ATP + H2O = CTP + L-glutamate + ADP + phosphate + 2 H(+). The catalysed reaction is L-glutamine + H2O = L-glutamate + NH4(+). The enzyme catalyses UTP + NH4(+) + ATP = CTP + ADP + phosphate + 2 H(+). It functions in the pathway pyrimidine metabolism; CTP biosynthesis via de novo pathway; CTP from UDP: step 2/2. Its activity is regulated as follows. Allosterically activated by GTP, when glutamine is the substrate; GTP has no effect on the reaction when ammonia is the substrate. The allosteric effector GTP functions by stabilizing the protein conformation that binds the tetrahedral intermediate(s) formed during glutamine hydrolysis. Inhibited by the product CTP, via allosteric rather than competitive inhibition. In terms of biological role, catalyzes the ATP-dependent amination of UTP to CTP with either L-glutamine or ammonia as the source of nitrogen. Regulates intracellular CTP levels through interactions with the four ribonucleotide triphosphates. This chain is CTP synthase, found in Rippkaea orientalis (strain PCC 8801 / RF-1) (Cyanothece sp. (strain PCC 8801)).